Consider the following 229-residue polypeptide: Guanylate kinase (229 aa).

Positions 7 to 42 constitute an RPE1 insert domain; that stretch reads RVLQKCAYREEFKGDMERSTAATSKLPLEVELSRNS. A Guanylate kinase-like domain is found at 44 to 222; it reads GLIIILSSPS…TLKKIHAIIV (179 aa). Residue 51 to 58 coordinates ATP; sequence SPSGTGKS.

This sequence belongs to the guanylate kinase family.

The protein resides in the cytoplasm. It carries out the reaction GMP + ATP = GDP + ADP. Its function is as follows. Essential for recycling GMP and indirectly, cGMP. The chain is Guanylate kinase (gmk) from Rickettsia conorii (strain ATCC VR-613 / Malish 7).